A 408-amino-acid polypeptide reads, in one-letter code: Peptidase T (408 aa).

Residue histidine 78 participates in Zn(2+) binding. Aspartate 80 is a catalytic residue. Aspartate 140 contacts Zn(2+). Glutamate 174 serves as the catalytic Proton acceptor. Positions 175, 197, and 379 each coordinate Zn(2+).

It belongs to the peptidase M20B family. The cofactor is Zn(2+).

It localises to the cytoplasm. It carries out the reaction Release of the N-terminal residue from a tripeptide.. Cleaves the N-terminal amino acid of tripeptides. The sequence is that of Peptidase T from Staphylococcus aureus (strain bovine RF122 / ET3-1).